The primary structure comprises 150 residues: Flagellar assembly factor FliW (150 aa).

The protein belongs to the FliW family. As to quaternary structure, interacts with translational regulator CsrA. Interacts with flagellins FlaB1, FlaB2 and FlaB3.

The protein resides in the cytoplasm. Acts as an anti-CsrA protein, binds CsrA and prevents it from repressing translation of its target genes, one of which is flagellin. Binds to flagellin and participates in the assembly of the flagellum. Its function is as follows. Binds to the C-terminal region of flagellin, which is implicated in polymerization, and participates in the assembly of the flagellum. This is Flagellar assembly factor FliW from Treponema pallidum (strain Nichols).